A 241-amino-acid chain; its full sequence is Phosphoribosylformylglycinamidine synthase subunit PurQ (241 aa).

Residues 6–241 enclose the Glutamine amidotransferase type-1 domain; the sequence is NVGIVVFPGS…QSLLLASAFA (236 aa). C90 functions as the Nucleophile in the catalytic mechanism. Residues H207 and E209 contribute to the active site.

Part of the FGAM synthase complex composed of 1 PurL, 1 PurQ and 2 PurS subunits.

The protein localises to the cytoplasm. The enzyme catalyses N(2)-formyl-N(1)-(5-phospho-beta-D-ribosyl)glycinamide + L-glutamine + ATP + H2O = 2-formamido-N(1)-(5-O-phospho-beta-D-ribosyl)acetamidine + L-glutamate + ADP + phosphate + H(+). The catalysed reaction is L-glutamine + H2O = L-glutamate + NH4(+). It functions in the pathway purine metabolism; IMP biosynthesis via de novo pathway; 5-amino-1-(5-phospho-D-ribosyl)imidazole from N(2)-formyl-N(1)-(5-phospho-D-ribosyl)glycinamide: step 1/2. Functionally, part of the phosphoribosylformylglycinamidine synthase complex involved in the purines biosynthetic pathway. Catalyzes the ATP-dependent conversion of formylglycinamide ribonucleotide (FGAR) and glutamine to yield formylglycinamidine ribonucleotide (FGAM) and glutamate. The FGAM synthase complex is composed of three subunits. PurQ produces an ammonia molecule by converting glutamine to glutamate. PurL transfers the ammonia molecule to FGAR to form FGAM in an ATP-dependent manner. PurS interacts with PurQ and PurL and is thought to assist in the transfer of the ammonia molecule from PurQ to PurL. In Thermosynechococcus vestitus (strain NIES-2133 / IAM M-273 / BP-1), this protein is Phosphoribosylformylglycinamidine synthase subunit PurQ.